Reading from the N-terminus, the 638-residue chain is Neuroendocrine convertase 2 (638 aa).

Residues 1–25 form the signal peptide; it reads MKGGCVSQWKAAAGFLFCVMVFASA. A propeptide spanning residues 26–109 is cleaved from the precursor; sequence ERPVFTNHFL…QQEGFDRKKR (84 aa). The Peptidase S8 domain occupies 129–453; it reads QWYLINTGQA…YGVLDAGAMV (325 aa). Active-site charge relay system residues include Asp-167 and His-208. 2 disulfide bridges follow: Cys-225-Cys-376 and Cys-317-Cys-347. Asn-375 is a glycosylation site (N-linked (GlcNAc...) asparagine). The active-site Charge relay system is the Ser-384. Positions 461-597 constitute a P/Homo B domain; the sequence is TVPERFHCVG…TLMLHGTQSA (137 aa). Cys-468 and Cys-494 form a disulfide bridge. 2 N-linked (GlcNAc...) asparagine glycosylation sites follow: Asn-514 and Asn-524.

It belongs to the peptidase S8 family. Furin subfamily.

Its subcellular location is the cytoplasmic vesicle. It is found in the secretory vesicle. The protein localises to the secreted. The catalysed reaction is Release of protein hormones and neuropeptides from their precursors, generally by hydrolysis of -Lys-Arg-|- bonds.. Its function is as follows. Serine endopeptidase which is involved in the processing of hormone and other protein precursors at sites comprised of pairs of basic amino acid residues. Responsible for the release of glucagon from proglucagon in pancreatic A cells. The chain is Neuroendocrine convertase 2 (PCSK2) from Pongo abelii (Sumatran orangutan).